A 106-amino-acid polypeptide reads, in one-letter code: ATP-dependent Clp protease adapter protein ClpS (106 aa).

Residues 1–13 (MPRKTSHEHDHGL) are compositionally biased toward basic and acidic residues. The interval 1–21 (MPRKTSHEHDHGLVVETSKPE) is disordered.

Belongs to the ClpS family. As to quaternary structure, binds to the N-terminal domain of the chaperone ClpA.

Functionally, involved in the modulation of the specificity of the ClpAP-mediated ATP-dependent protein degradation. The chain is ATP-dependent Clp protease adapter protein ClpS from Xanthomonas campestris pv. campestris (strain 8004).